The sequence spans 2813 residues: MIPARFAGVLLALALILPGTLCAEGTRGRSSTARCSLFGSDFVNTFDGSMYSFAGYCSYLLAGGCQKRSFSIIGDFQNGKRVSLSVYLGEFFDIHLFVNGTVTQGDQRVSMPYASKGLYLETEAGYYKLSGEAYGFVARIDGSGNFQVLLSDRYFNKTCGLCGNFNIFAEDDFMTQEGTLTSDPYDFANSWALSSGEQWCERASPPSSSCNISSGEMQKGLWEQCQLLKSTSVFARCHPLVDPEPFVALCEKTLCECAGGLECACPALLEYARTCAQEGMVLYGWTDHSACSPVCPAGMEYRQCVSPCARTCQSLHINEMCQERCVDGCSCPEGQLLDEGLCVESTECPCVHSGKRYPPGTSLSRDCNTCICRNSQWICSNEECPGECLVTGQSHFKSFDNRYFTFSGICQYLLARDCQDHSFSIVIETVQCADDRDAVCTRSVTVRLPGLHNSLVKLKHGAGVAMDGQDVQLPLLKGDLRIQHTVTASVRLSYGEDLQMDWDGRGRLLVKLSPVYAGKTCGLCGNYNGNQGDDFLTPSGLAEPRVEDFGNAWKLHGDCQDLQKQHSDPCALNPRMTRFSEEACAVLTSPTFEACHRAVSPLPYLRNCRYDVCSCSDGRECLCGALASYAAACAGRGVRVAWREPGRCELNCPKGQVYLQCGTPCNLTCRSLSYPDEECNEACLEGCFCPPGLYMDERGDCVPKAQCPCYYDGEIFQPEDIFSDHHTMCYCEDGFMHCTMSGVPGSLLPDAVLSSPLSHRSKRSLSCRPPMVKLVCPADNLRAEGLECTKTCQNYDLECMSMGCVSGCLCPPGMVRHENRCVALERCPCFHQGKEYAPGETVKIGCNTCVCQDRKWNCTDHVCDATCSTIGMAHYLTFDGLKYLFPGECQYVLVQDYCGSNPGTFRILVGNKGCSHPSVKCKKRVTILVEGGEIELFDGEVNVKRPMKDETHFEVVESGRYIILLLGKALSVVWDRHLSISVVLKQTYQEKVCGLCGNFDGIQNNDLTSSNLQVEEDPVDFGNSWKVSSQCADTRKVPLDSSPATCHNNIMKQTMVDSSCRILTSDVFQDCNKLVDPEPYLDVCIYDTCSCESIGDCACFCDTIAAYAHVCAQHGKVVTWRTATLCPQSCEERNLRENGYECEWRYNSCAPACQVTCQHPEPLACPVQCVEGCHAHCPPGKILDELLQTCVDPEDCPVCEVAGRRFASGKKVTLNPSDPEHCQICHCDVVNLTCEACQEPGGLVVPPTDAPVSPTTLYVEDISEPPLHDFYCSRLLDLVFLLDGSSRLSEAEFEVLKAFVVDMMERLRISQKWVRVAVVEYHDGSHAYIGLKDRKRPSELRRIASQVKYAGSQVASTSEVLKYTLFQIFSKIDRPEASRITLLLMASQEPQRMSRNFVRYVQGLKKKKVIVIPVGIGPHANLKQIRLIEKQAPENKAFVLSSVDELEQQRDEIVSYLCDLAPEAPPPTLPPDMAQVTVGPGLLGVSTLGPKRNSMVLDVAFVLEGSDKIGEADFNRSKEFMEEVIQRMDVGQDSIHVTVLQYSYMVTVEYPFSEAQSKGDILQRVREIRYQGGNRTNTGLALRYLSDHSFLVSQGDREQAPNLVYMVTGNPASDEIKRLPGDIQVVPIGVGPNANVQELERIGWPNAPILIQDFETLPREAPDLVLQRCCSGEGLQIPTLSPAPDCSQPLDVILLLDGSSSFPASYFDEMKSFAKAFISKANIGPRLTQVSVLQYGSITTIDVPWNVVPEKAHLLSLVDVMQREGGPSQIGDALGFAVRYLTSEMHGARPGASKAVVILVTDVSVDSVDAAADAARSNRVTVFPIGIGDRYDAAQLRILAGPAGDSNVVKLQRIEDLPTMVTLGNSFLHKLCSGFVRICMDEDGNEKRPGDVWTLPDQCHTVTCQPDGQTLLKSHRVNCDRGLRPSCPNSQSPVKVEETCGCRWTCPCVCTGSSTRHIVTFDGQNFKLTGSCSYVLFQNKEQDLEVILHNGACSPGARQGCMKSIEVKHSALSVELHSDMEVTVNGRLVSVPYVGGNMEVNVYGAIMHEVRFNHLGHIFTFTPQNNEFQLQLSPKTFASKTYGLCGICDENGANDFMLRDGTVTTDWKTLVQEWTVQRPGQTCQPILEEQCLVPDSSHCQVLLLPLFAECHKVLAPATFYAICQQDSCHQEQVCEVIASYAHLCRTNGVCVDWRTPDFCAMSCPPSLVYNHCEHGCPRHCDGNVSSCGDHPSEGCFCPPDKVMLEGSCVPEEACTQCIGEDGVQHQFLEAWVPDHQPCQICTCLSGRKVNCTTQPCPTAKAPTCGLCEVARLRQNADQCCPEYECVCDPVSCDLPPVPHCERGLQPTLTNPGECRPNFTCACRKEECKRVSPPSCPPHRLPTLRKTQCCDEYECACNCVNSTVSCPLGYLASTATNDCGCTTTTCLPDKVCVHRSTIYPVGQFWEEGCDVCTCTDMEDAVMGLRVAQCSQKPCEDSCRSGFTYVLHEGECCGRCLPSACEVVTGSPRGDSQSSWKSVGSQWASPENPCLINECVRVKEEVFIQQRNVSCPQLEVPVCPSGFQLSCKTSACCPSCRCERMEACMLNGTVIGPGKTVMIDVCTTCRCMVQVGVISGFKLECRKTTCNPCPLGYKEENNTGECCGRCLPTACTIQLRGGQIMTLKRDETLQDGCDTHFCKVNERGEYFWEKRVTGCPPFDEHKCLAEGGKIMKIPGTCCDTCEEPECNDITARLQYVKVGSCKSEVEVDIHYCQGKCASKAMYSIDINDVQDQCSCCSPTRTEPMQVALHCTNGSVVYHEVLNAMECKCSPRKCSK.

Residues 1-22 (MIPARFAGVLLALALILPGTLC) form the signal peptide. Residues 33-201 (ARCSLFGSDF…ALSSGEQWCE (169 aa)) enclose the VWFD 1 domain. 2 disulfide bridges follow: Cys35–Cys162 and Cys57–Cys200. N-linked (GlcNAc...) asparagine glycosylation is found at Asn99, Asn156, and Asn211. In terms of domain architecture, TIL 1 spans 295 to 348 (CPAGMEYRQCVSPCARTCQSLHINEMCQERCVDGCSCPEGQLLDEGLCVESTEC). Positions 386–560 (GECLVTGQSH…NAWKLHGDCQ (175 aa)) constitute a VWFD 2 domain. Disulfide bonds link Cys388–Cys524, Cys410–Cys559, and Cys432–Cys440. TIL domains lie at 652 to 707 (CPKG…KAQC) and 776 to 827 (CPAD…LERC). The N-linked (GlcNAc...) asparagine glycan is linked to Asn666. Residues 764–787 (SLSCRPPMVKLVCPADNLRAEGLE) form an amino-terminal region. Cystine bridges form between Cys767-Cys808, Cys776-Cys804, and Cys810-Cys821. Positions 788–833 (CTKTCQNYDLECMSMGCVSGCLCPPGMVRHENRCVALERCPCFHQG) are E1. Positions 826–853 (RCPCFHQGKEYAPGETVKIGCNTCVCQD) are CX. The N-linked (GlcNAc...) asparagine glycan is linked to Asn857. In terms of domain architecture, VWFD 3 spans 865–1032 (ATCSTIGMAH…NSWKVSSQCA (168 aa)). Intrachain disulfides connect Cys867–Cys996, Cys889–Cys1031, Cys898–Cys993, Cys914–Cys921, Cys1060–Cys1084, Cys1071–Cys1111, Cys1089–Cys1091, and Cys1126–Cys1130. The TIL 4 domain occupies 1146-1196 (YNSCAPACQVTCQHPEPLACPVQCVEGCHAHCPPGKILDELLQTCVDPEDC). The N-linked (GlcNAc...) asparagine; atypical glycan is linked to Asn1147. 3 cysteine pairs are disulfide-bonded: Cys1149–Cys1169, Cys1153–Cys1165, and Cys1196–Cys1199. An N-linked (GlcNAc...) asparagine glycan is attached at Asn1231. A disulfide bridge connects residues Cys1234 and Cys1237. 3 O-linked (GalNAc...) threonine glycosylation sites follow: Thr1248, Thr1255, and Thr1256. O-linked (GalNAc...) serine glycosylation occurs at Ser1263. Cys1272 and Cys1458 are disulfide-bonded. Residues 1277–1453 (DLVFLLDGSS…DELEQQRDEI (177 aa)) enclose the VWFA 1; binding site for platelet glycoprotein Ib domain. 2 O-linked (GalNAc...) threonine glycosylation sites follow: Thr1468 and Thr1477. Ser1486 is a glycosylation site (O-linked (GalNAc...) serine). O-linked (GalNAc...) threonine glycosylation occurs at Thr1487. The VWFA 2 domain maps to 1498-1665 (DVAFVLEGSD…TLPREAPDLV (168 aa)). N-linked (GlcNAc...) (complex) asparagine glycosylation is present at Asn1515. Residue Asn1574 is glycosylated (N-linked (GlcNAc...) asparagine). Cys1669 and Cys1670 are disulfide-bonded. Thr1679 carries an O-linked (GalNAc...) threonine glycan. 7 disulfides stabilise this stretch: Cys1686–Cys1872, Cys1879–Cys1904, Cys1899–Cys1940, Cys1927–Cys2088, Cys1950–Cys2085, Cys1972–Cys2123, and Cys1993–Cys2001. The 181-residue stretch at 1691 to 1871 (DVILLLDGSS…TLGNSFLHKL (181 aa)) folds into the VWFA 3; main binding site for collagens type I and III domain. One can recognise a VWFD 4 domain in the interval 1948-2124 (CVCTGSSTRH…TVQRPGQTCQ (177 aa)). The tract at residues 2216–2261 (CPRHCDGNVSSCGDHPSEGCFCPPDKVMLEGSCVPEEACTQCIGED) is E2. 2 N-linked (GlcNAc...) asparagine glycosylation sites follow: Asn2223 and Asn2290. The VWFC 1 domain maps to 2255-2328 (TQCIGEDGVQ…CCPEYECVCD (74 aa)). Thr2298 carries O-linked (GalNAc...) threonine glycosylation. N-linked (GlcNAc...) asparagine glycans are attached at residues Asn2357 and Asn2400. Residues 2429-2495 (KVCVHRSTIY…HEGECCGRCL (67 aa)) form the VWFC 2 domain. The Cell attachment site motif lies at 2507-2509 (RGD). Residues Asn2546 and Asn2585 are each glycosylated (N-linked (GlcNAc...) asparagine). The 66-residue stretch at 2580–2645 (EACMLNGTVI…NTGECCGRCL (66 aa)) folds into the VWFC 3 domain. 4 disulfide bridges follow: Cys2724–Cys2774, Cys2739–Cys2788, Cys2750–Cys2804, and Cys2754–Cys2806. Residues 2724-2812 (CNDITARLQY…ECKCSPRKCS (89 aa)) form the CTCK domain. A glycan (N-linked (GlcNAc...) asparagine) is linked at Asn2790.

In terms of assembly, multimeric. Interacts with F8. In terms of processing, all cysteine residues are involved in intrachain or interchain disulfide bonds. N- and O-glycosylated. As to expression, plasma.

It localises to the secreted. The protein localises to the extracellular space. It is found in the extracellular matrix. In terms of biological role, important in the maintenance of hemostasis, it promotes adhesion of platelets to the sites of vascular injury by forming a molecular bridge between sub-endothelial collagen matrix and platelet-surface receptor complex GPIb-IX-V. Also acts as a chaperone for coagulation factor VIII, delivering it to the site of injury, stabilizing its heterodimeric structure and protecting it from premature clearance from plasma. This Homo sapiens (Human) protein is von Willebrand factor (VWF).